Here is a 120-residue protein sequence, read N- to C-terminus: uncharacterized protein (120 aa).

Asn-29 and Asn-68 each carry an N-linked (GlcNAc...) asparagine; by host glycan. The helical transmembrane segment at 74–94 threads the bilayer; that stretch reads IFNGLGFILIVIFIYLLIITL.

It belongs to the asfivirus B117L family.

Its subcellular location is the host membrane. It localises to the virion. This is an uncharacterized protein from Ornithodoros (relapsing fever ticks).